The following is a 249-amino-acid chain: 5'-nucleotidase SurE (249 aa).

The a divalent metal cation site is built by Asp-8, Asp-9, Ser-39, and Asn-91.

It belongs to the SurE nucleotidase family. A divalent metal cation serves as cofactor.

The protein resides in the cytoplasm. It carries out the reaction a ribonucleoside 5'-phosphate + H2O = a ribonucleoside + phosphate. Functionally, nucleotidase that shows phosphatase activity on nucleoside 5'-monophosphates. The polypeptide is 5'-nucleotidase SurE (Pseudomonas fluorescens (strain Pf0-1)).